The sequence spans 427 residues: Pectin acetylesterase 5 (427 aa).

Residues 1-35 (MAIPRFSSLLRCRKWAKSDWLVASIGCVLIVFFLS) form the signal peptide. Asn173 is a glycosylation site (N-linked (GlcNAc...) asparagine). Active-site charge relay system residues include Ser209, Asp305, and His372. N-linked (GlcNAc...) asparagine glycosylation occurs at Asn391.

It belongs to the pectinacetylesterase family.

It localises to the secreted. It is found in the cell wall. In terms of biological role, hydrolyzes acetyl esters in homogalacturonan regions of pectin. In type I primary cell wall, galacturonic acid residues of pectin can be acetylated at the O-2 and O-3 positions. Decreasing the degree of acetylation of pectin gels in vitro alters their physical properties. The polypeptide is Pectin acetylesterase 5 (Arabidopsis thaliana (Mouse-ear cress)).